A 159-amino-acid chain; its full sequence is Ribosomal RNA large subunit methyltransferase H (159 aa).

Residues leucine 76, glycine 108, and 127–132 contribute to the S-adenosyl-L-methionine site; that span reads FSKMTF.

Belongs to the RNA methyltransferase RlmH family. In terms of assembly, homodimer.

The protein resides in the cytoplasm. It catalyses the reaction pseudouridine(1915) in 23S rRNA + S-adenosyl-L-methionine = N(3)-methylpseudouridine(1915) in 23S rRNA + S-adenosyl-L-homocysteine + H(+). Functionally, specifically methylates the pseudouridine at position 1915 (m3Psi1915) in 23S rRNA. The polypeptide is Ribosomal RNA large subunit methyltransferase H (Clostridium botulinum (strain Eklund 17B / Type B)).